We begin with the raw amino-acid sequence, 308 residues long: Methionyl-tRNA formyltransferase (308 aa).

(6S)-5,6,7,8-tetrahydrofolate is bound at residue 109–112; the sequence is SLLP.

The protein belongs to the Fmt family.

The catalysed reaction is L-methionyl-tRNA(fMet) + (6R)-10-formyltetrahydrofolate = N-formyl-L-methionyl-tRNA(fMet) + (6S)-5,6,7,8-tetrahydrofolate + H(+). Attaches a formyl group to the free amino group of methionyl-tRNA(fMet). The formyl group appears to play a dual role in the initiator identity of N-formylmethionyl-tRNA by promoting its recognition by IF2 and preventing the misappropriation of this tRNA by the elongation apparatus. This Clostridium beijerinckii (strain ATCC 51743 / NCIMB 8052) (Clostridium acetobutylicum) protein is Methionyl-tRNA formyltransferase.